The primary structure comprises 35 residues: AFGTILKALAKIAAKAVKKLATKPGATYMLKQNLE.

The residue at position 35 (glutamate 35) is a Glutamic acid 1-amide.

In terms of tissue distribution, expressed by the venom gland.

Its subcellular location is the secreted. The protein is Cupiennin-2e of Cupiennius salei (American wandering spider).